Reading from the N-terminus, the 599-residue chain is MLYPLLTKTRNTYDLGGIWNFKLGEHNPNELLPSDEVMVIPTSFNDLMVSKEKRDYIGDFWYEKVIEVPKVSEDEEMVLRFGSVTHQAKIYVDGVLVGEHKGGFTPFEVLVPECKYNNEKIKVSICANNVLDYTTLPVGNYSEIIQEDGSIKKKVRENFDFFNYAGVHRPLKLMIRPKNHIFDITITSRLSDDLQSADLHFLVETNQKVDEVRISVFDEDNKLVGETKDSRLFLSDVHLWEVLNAYLYTARVEIFVDNQLQDVYEENFGLREIEVTNGQFLLNRKPIYFKGFGKHEDTFINGRGLNEAANLMDLNLLKDMGANSFRTSHYPYSEEMMRLADRMGVLVIDEVPAVGLFQNFNASLDLSPKDNGTWNLMQTKAAHEQAIQELVKRDKNHPSVVMWVVANEPASHEAGAHDYFEPLVKLYKDLDPQKRPVTLVNILMATPDRDQVMDLVDVVCLNRYYGWYVDHGDLTNAEVGIRKELLEWQDKFPDKPIIITEYGADTLPGLHSTWNIPYTEEFQCDFYEMSHRVFDGIPNLVGEQVWNFADFETNLMILRVQGNHKGLFSRNRQPKQVVKEFKKRWMTIPHYHNKKNSVK.

D160 and N407 together coordinate D-glucuronate. The active-site Proton donor is the E408. N462, Y468, E501, W546, and K565 together coordinate D-glucuronate. E501 serves as the catalytic Nucleophile. Positions 563 to 565 match the N-K motif motif; it reads NHK.

Belongs to the glycosyl hydrolase 2 family.

It carries out the reaction a beta-D-glucuronoside + H2O = D-glucuronate + an alcohol. With respect to regulation, inhibited by a set of synthetic compounds like thio-urea derivatives and analogs. Inhibitors of gut microbial beta-glucuronidases are expected to block the reactivation of glucuronidated cancer drugs, and to alleviate drug-induced GI toxicity. Functionally, displays beta-glucuronidase activity with the artificial substrate p-nitrophenyl-beta-D-glucuronide (PNPG). Is likely capable of scavenging glucuronate from a range of chemically distinct xenobiotic and endobiotic glucuronides present in the gastrointestinal (GI) tract, to be able to utilize these diverse sources of carbon. As part of the GI microbiome, this enzyme would be able to reactivate glucuronide drug conjugates, such reactivated compounds can significantly damage the GI tract. The polypeptide is Beta-glucuronidase (Streptococcus agalactiae serotype V (strain ATCC BAA-611 / 2603 V/R)).